The sequence spans 153 residues: Succinate dehydrogenase assembly factor 2, mitochondrial (153 aa).

Belongs to the SDHAF2 family. In terms of assembly, interacts with the flavoprotein subunit within the SDH catalytic dimer.

The protein localises to the mitochondrion matrix. Plays an essential role in the assembly of succinate dehydrogenase (SDH), an enzyme complex (also referred to as respiratory complex II) that is a component of both the tricarboxylic acid (TCA) cycle and the mitochondrial electron transport chain, and which couples the oxidation of succinate to fumarate with the reduction of ubiquinone (coenzyme Q) to ubiquinol. Required for flavinylation (covalent attachment of FAD) of the flavoprotein subunit of the SDH catalytic dimer. The sequence is that of Succinate dehydrogenase assembly factor 2, mitochondrial from Candida glabrata (strain ATCC 2001 / BCRC 20586 / JCM 3761 / NBRC 0622 / NRRL Y-65 / CBS 138) (Yeast).